We begin with the raw amino-acid sequence, 810 residues long: LPS-assembly protein LptD (810 aa).

Residues 1-29 (MTKRTLGYSYPIALTISLVPALTPAIVQA) form the signal peptide.

The protein belongs to the LptD family. As to quaternary structure, component of the lipopolysaccharide transport and assembly complex. Interacts with LptE and LptA.

It is found in the cell outer membrane. Its function is as follows. Together with LptE, is involved in the assembly of lipopolysaccharide (LPS) at the surface of the outer membrane. This Aeromonas hydrophila subsp. hydrophila (strain ATCC 7966 / DSM 30187 / BCRC 13018 / CCUG 14551 / JCM 1027 / KCTC 2358 / NCIMB 9240 / NCTC 8049) protein is LPS-assembly protein LptD.